We begin with the raw amino-acid sequence, 333 residues long: Phosphoribosylformylglycinamidine cyclo-ligase (333 aa).

This sequence belongs to the AIR synthase family.

The protein resides in the cytoplasm. The enzyme catalyses 2-formamido-N(1)-(5-O-phospho-beta-D-ribosyl)acetamidine + ATP = 5-amino-1-(5-phospho-beta-D-ribosyl)imidazole + ADP + phosphate + H(+). It functions in the pathway purine metabolism; IMP biosynthesis via de novo pathway; 5-amino-1-(5-phospho-D-ribosyl)imidazole from N(2)-formyl-N(1)-(5-phospho-D-ribosyl)glycinamide: step 2/2. This is Phosphoribosylformylglycinamidine cyclo-ligase from Methanosarcina mazei (strain ATCC BAA-159 / DSM 3647 / Goe1 / Go1 / JCM 11833 / OCM 88) (Methanosarcina frisia).